Here is a 241-residue protein sequence, read N- to C-terminus: Terpene cyclase olcD (241 aa).

The next 7 helical transmembrane spans lie at 19–39, 49–71, 76–95, 108–128, 137–157, 166–186, and 202–222; these read LSDILLVTLASGWLVCYFATI, WMPLLPLSCNVAWELVFITLYPP, ILGFWLLVNLGVIYSALRFA, YLPVLFVLAVGFWAWGHLALI, FYYGGMACQLMTSAAALSGLV, SYTIWLSRVIGTSSALAGLFF, and LMRWLAAAFGILDGVYGVQFW.

This sequence belongs to the paxB family.

Its subcellular location is the membrane. It participates in secondary metabolite biosynthesis; terpenoid biosynthesis. In terms of biological role, terpene cyclase; part of the gene cluster that mediates the biosynthesis of 15-deoxyoxalicine B. The first step of the pathway is the synthesis of nicotinyl-CoA from nicotinic acid by the nicotinic acid-CoA ligase olcI. Nicotinyl-CoA is then a substrate of polyketide synthase olcA to produce 4-hydroxy-6-(3-pyridinyl)-2H-pyran-2-one (HPPO) which is further prenylated by the polyprenyl transferase olcH to yield geranylgeranyl-HPPO. Geranylgeranyl pyrophosphate is provided by the cluster-specific geranylgeranyl pyrophosphate synthase olcC. The FAD-dependent monooxygenase olcE catalyzes the epoxidation of geranylgeranyl-HPPO and the terpene cyclase olcD catalyzes the cyclization of the terpenoid component, resulting in the formation of the tricyclic terpene moiety seen in predecaturin E. The cytochrome P450 monooxygenase then catalyzes the allylic oxidation of predecaturin E, which is followed by spirocylization with concomitant loss of one molecule of water to form decaturin E. Decaturin E is the substrate of the cytochrome P450 monooxygenase olcJ which hydroxylates it at the C-29 position to form decaturin F. The short-chain dehydrogenase/reductase olcF may catalyze the oxidation of decaturin F to generate the 29-hydroxyl-27-one intermediate, and subsequent hemiacetal formation probably leads to the formation of decaturin C. The dioxygenase olcK may be a peroxisomal enzyme that catalyzes the hydroxylation of decaturin C into decaturin A once decaturin C is shuttled into the peroxisome by the MFS transporter olcL. Finally the cytochrome P450 monooxygenase olcB catalyzes the oxidative rearrangement to yield 15-deoxyoxalicine B. In the absence of olcJ, decaturin E may be shunted to a pathway in which it is oxidized to a ketone, possibly by olcF, to form decaturin D, which undergoes further allylic oxidation to yield decaturin G. Moreover, in the absence of oclK or oclL, oclB can convert decaturin C into 15-deoxyoxalicine A. The polypeptide is Terpene cyclase olcD (Penicillium canescens).